Reading from the N-terminus, the 185-residue chain is Peptidyl-tRNA hydrolase (185 aa).

Residue tyrosine 14 participates in tRNA binding. Histidine 19 serves as the catalytic Proton acceptor. TRNA is bound by residues tyrosine 64, asparagine 66, and asparagine 112.

Belongs to the PTH family. In terms of assembly, monomer.

It is found in the cytoplasm. The catalysed reaction is an N-acyl-L-alpha-aminoacyl-tRNA + H2O = an N-acyl-L-amino acid + a tRNA + H(+). In terms of biological role, hydrolyzes ribosome-free peptidyl-tRNAs (with 1 or more amino acids incorporated), which drop off the ribosome during protein synthesis, or as a result of ribosome stalling. Functionally, catalyzes the release of premature peptidyl moieties from peptidyl-tRNA molecules trapped in stalled 50S ribosomal subunits, and thus maintains levels of free tRNAs and 50S ribosomes. In Lactiplantibacillus plantarum (strain ATCC BAA-793 / NCIMB 8826 / WCFS1) (Lactobacillus plantarum), this protein is Peptidyl-tRNA hydrolase.